Here is a 294-residue protein sequence, read N- to C-terminus: uncharacterized protein (294 aa).

The Tyrosine-protein phosphatase domain occupies 13 to 151 (QCSQIRPYLY…LIDLEQKLRG (139 aa)). C95 acts as the Phosphocysteine intermediate in catalysis. The segment at 234–294 (PTLLVPSSSS…WRLSFHKDVV (61 aa)) is disordered.

This sequence belongs to the protein-tyrosine phosphatase family. Non-receptor class dual specificity subfamily.

This is an uncharacterized protein from Caenorhabditis elegans.